A 354-amino-acid polypeptide reads, in one-letter code: 3-dehydroquinate synthase (354 aa).

Residues 100 to 104 (GATGD), 124 to 125 (TT), K136, K145, and 163 to 166 (FLKT) contribute to the NAD(+) site. Zn(2+)-binding residues include E178, H242, and H256.

The protein belongs to the sugar phosphate cyclases superfamily. Dehydroquinate synthase family. NAD(+) is required as a cofactor. The cofactor is Co(2+). It depends on Zn(2+) as a cofactor.

The protein resides in the cytoplasm. The enzyme catalyses 7-phospho-2-dehydro-3-deoxy-D-arabino-heptonate = 3-dehydroquinate + phosphate. It participates in metabolic intermediate biosynthesis; chorismate biosynthesis; chorismate from D-erythrose 4-phosphate and phosphoenolpyruvate: step 2/7. Functionally, catalyzes the conversion of 3-deoxy-D-arabino-heptulosonate 7-phosphate (DAHP) to dehydroquinate (DHQ). This Staphylococcus aureus (strain COL) protein is 3-dehydroquinate synthase.